An 80-amino-acid chain; its full sequence is Exodeoxyribonuclease 7 small subunit (80 aa).

The protein belongs to the XseB family. Heterooligomer composed of large and small subunits.

It is found in the cytoplasm. The catalysed reaction is Exonucleolytic cleavage in either 5'- to 3'- or 3'- to 5'-direction to yield nucleoside 5'-phosphates.. Functionally, bidirectionally degrades single-stranded DNA into large acid-insoluble oligonucleotides, which are then degraded further into small acid-soluble oligonucleotides. The chain is Exodeoxyribonuclease 7 small subunit from Rickettsia akari (strain Hartford).